We begin with the raw amino-acid sequence, 134 residues long: Transcription antitermination protein NusB (134 aa).

The protein belongs to the NusB family.

Functionally, involved in transcription antitermination. Required for transcription of ribosomal RNA (rRNA) genes. Binds specifically to the boxA antiterminator sequence of the ribosomal RNA (rrn) operons. The polypeptide is Transcription antitermination protein NusB (Shewanella sp. (strain MR-4)).